Consider the following 74-residue polypeptide: uncharacterized protein (74 aa).

A helical transmembrane segment spans residues 54-72 (LIIPRFLLLIYSVIQCLFL).

The protein localises to the membrane. This is an uncharacterized protein from Saccharomyces cerevisiae (strain ATCC 204508 / S288c) (Baker's yeast).